The sequence spans 210 residues: Mitochondrial cardiolipin hydrolase (210 aa).

The Mitochondrial intermembrane segment spans residues 1–5; sequence MLLWG. A helical transmembrane segment spans residues 6–24; that stretch reads RWKLAAGLAGLALSLELFY. Topologically, residues 25–210 are cytoplasmic; the sequence is RYMRRRKPLR…YNFFPEKENK (186 aa). The region spanning 138 to 165 is the PLD phosphodiesterase domain; that stretch reads SSGYMHHKFAVVDGTVVLTGSLNWTVQA. Active-site residues include H143, K145, and D150.

This sequence belongs to the phospholipase D family. MitoPLD/Zucchini subfamily. Homodimer.

Its subcellular location is the mitochondrion outer membrane. It catalyses the reaction a cardiolipin + H2O = a 1,2-diacyl-sn-glycero-3-phospho-(1'-sn-glycerol) + a 1,2-diacyl-sn-glycero-3-phosphate + H(+). In terms of biological role, presents phospholipase and nuclease activities, depending on the different physiological conditions. Plays a key role in mitochondrial fusion and fission via its phospholipase activity. In its phospholipase role, it uses the mitochondrial lipid cardiolipin as substrate to generate phosphatidate (PA or 1,2-diacyl-sn-glycero-3-phosphate), a second messenger signaling lipid. Production of PA facilitates Mitofusin-mediated fusion, whereas the cleavage of PA by the Lipin family of phosphatases produces diacylgycerol (DAG) which promotes mitochondrial fission. Regulates mitochondrial shape through facilitating mitochondrial fusion. During spermatogenesis, plays a critical role in PIWI-interacting RNA (piRNA) biogenesis. piRNAs provide essential protection against the activity of mobile genetic elements. piRNA-mediated transposon silencing is thus critical for maintaining genome stability, in particular in germline cells when transposons are mobilized as a consequence of wide-spread genomic demethylation. Has been shown to be a backbone-non-specific, single strand-specific nuclease, cleaving either RNA or DNA substrates with similar affinity. Produces 5' phosphate and 3' hydroxyl termini, suggesting it could directly participate in the processing of primary piRNA transcripts. Has been proposed to act as a cardiolipin hydrolase to generate phosphatidic acid at mitochondrial surface. Although it cannot be excluded that it can act as a phospholipase in some circumstances, this activity could not be confirmed. The protein is Mitochondrial cardiolipin hydrolase (pld6) of Xenopus laevis (African clawed frog).